The chain runs to 388 residues: Chorismate synthase (388 aa).

NADP(+) contacts are provided by arginine 39 and arginine 45. Residues 130 to 132 (RSS), 251 to 252 (NA), glycine 296, 311 to 315 (KPIPT), and arginine 337 contribute to the FMN site.

This sequence belongs to the chorismate synthase family. As to quaternary structure, homotetramer. Requires FMNH2 as cofactor.

The enzyme catalyses 5-O-(1-carboxyvinyl)-3-phosphoshikimate = chorismate + phosphate. Its pathway is metabolic intermediate biosynthesis; chorismate biosynthesis; chorismate from D-erythrose 4-phosphate and phosphoenolpyruvate: step 7/7. In terms of biological role, catalyzes the anti-1,4-elimination of the C-3 phosphate and the C-6 proR hydrogen from 5-enolpyruvylshikimate-3-phosphate (EPSP) to yield chorismate, which is the branch point compound that serves as the starting substrate for the three terminal pathways of aromatic amino acid biosynthesis. This reaction introduces a second double bond into the aromatic ring system. The polypeptide is Chorismate synthase (Streptococcus mutans serotype c (strain ATCC 700610 / UA159)).